A 588-amino-acid polypeptide reads, in one-letter code: Protein gamma response 1 (588 aa).

2 coiled-coil regions span residues 64–104 and 164–281; these read AACD…LGKT and SEVK…KTVV. Basic and acidic residues-rich tracts occupy residues 377–389, 465–484, and 508–525; these read KHSE…DKVR, NVKR…KKDD, and TSKK…KAER. Disordered stretches follow at residues 377–398 and 417–525; these read KHSE…SGNN and PIVR…KAER.

Basal levels in mitotically dividing cells (meristems), and high levels in endoreduplicating cells (stipules, trichomes) (at protein level).

The protein localises to the nucleus. Seems to mediate cell cycle arrest before mitosis in response to DNA damage. Is probably also involved in the transition from mitosis to endoreduplication. The sequence is that of Protein gamma response 1 (GR1) from Arabidopsis thaliana (Mouse-ear cress).